The primary structure comprises 340 residues: Protein RecA (340 aa).

66-73 serves as a coordination point for ATP; it reads GPESSGKT.

This sequence belongs to the RecA family.

Its subcellular location is the cytoplasm. In terms of biological role, can catalyze the hydrolysis of ATP in the presence of single-stranded DNA, the ATP-dependent uptake of single-stranded DNA by duplex DNA, and the ATP-dependent hybridization of homologous single-stranded DNAs. It interacts with LexA causing its activation and leading to its autocatalytic cleavage. The chain is Protein RecA from Rickettsia prowazekii (strain Madrid E).